A 411-amino-acid chain; its full sequence is UPF0761 membrane protein PLES_43641 (411 aa).

A run of 6 helical transmembrane segments spans residues 36–56 (LFAV…IPAF), 92–112 (HLTW…LVTI), 132–152 (FLLY…GFAV), 174–194 (LLGL…YSAV), 207–229 (GGVF…VSLF), and 244–264 (IFLL…VLVC).

This sequence belongs to the UPF0761 family.

Its subcellular location is the cell inner membrane. This is UPF0761 membrane protein PLES_43641 from Pseudomonas aeruginosa (strain LESB58).